Here is a 466-residue protein sequence, read N- to C-terminus: L-seryl-tRNA(Sec) selenium transferase (466 aa).

The residue at position 294 (Lys294) is an N6-(pyridoxal phosphate)lysine.

This sequence belongs to the SelA family. Requires pyridoxal 5'-phosphate as cofactor.

It localises to the cytoplasm. It carries out the reaction L-seryl-tRNA(Sec) + selenophosphate + H(+) = L-selenocysteinyl-tRNA(Sec) + phosphate. It participates in aminoacyl-tRNA biosynthesis; selenocysteinyl-tRNA(Sec) biosynthesis; selenocysteinyl-tRNA(Sec) from L-seryl-tRNA(Sec) (bacterial route): step 1/1. Functionally, converts seryl-tRNA(Sec) to selenocysteinyl-tRNA(Sec) required for selenoprotein biosynthesis. This is L-seryl-tRNA(Sec) selenium transferase from Carboxydothermus hydrogenoformans (strain ATCC BAA-161 / DSM 6008 / Z-2901).